A 458-amino-acid polypeptide reads, in one-letter code: Phosphoglucosamine mutase (458 aa).

The active-site Phosphoserine intermediate is Ser-100. Ser-100, Asp-254, Asp-256, and Asp-258 together coordinate Mg(2+). Ser-100 carries the phosphoserine modification.

The protein belongs to the phosphohexose mutase family. It depends on Mg(2+) as a cofactor. Activated by phosphorylation.

It carries out the reaction alpha-D-glucosamine 1-phosphate = D-glucosamine 6-phosphate. Its function is as follows. Catalyzes the conversion of glucosamine-6-phosphate to glucosamine-1-phosphate. This is Phosphoglucosamine mutase from Nocardia farcinica (strain IFM 10152).